The sequence spans 386 residues: Cytochrome b (386 aa).

4 consecutive transmembrane segments (helical) span residues 32–52 (FGSLLALCLGIQIVTGVTLAM), 76–98 (WLIRYLHANTASAFFFLVYLHMG), 113–133 (TWNIGVVIFIVMIVTAFLGYV), and 179–199 (FFSLHYLLPFILAALVLMHLI). Heme b is bound by residues histidine 82 and histidine 96. Histidine 183 and histidine 197 together coordinate heme b. Histidine 202 is a binding site for a ubiquinone. 4 helical membrane passes run 226-246 (FLFKDLVTIFLFMLGLSIFVL), 290-310 (TLGVVAMLGAILILMALPYLD), 322-342 (LSKIAFYIFIANFLVLMILGA), and 349-369 (FIIFGQISTTLYFSYFIIITP).

The protein belongs to the cytochrome b family. In terms of assembly, fungal cytochrome b-c1 complex contains 10 subunits; 3 respiratory subunits, 2 core proteins and 5 low-molecular weight proteins. Cytochrome b-c1 complex is a homodimer. Heme b serves as cofactor.

It is found in the mitochondrion inner membrane. Component of the ubiquinol-cytochrome c reductase complex (complex III or cytochrome b-c1 complex) that is part of the mitochondrial respiratory chain. The b-c1 complex mediates electron transfer from ubiquinol to cytochrome c. Contributes to the generation of a proton gradient across the mitochondrial membrane that is then used for ATP synthesis. The polypeptide is Cytochrome b (COB) (Trichophyton rubrum (Athlete's foot fungus)).